The chain runs to 482 residues: UDP-N-acetylmuramate--L-alanine ligase (482 aa).

Position 129–135 (129–135 (GTHGKTT)) interacts with ATP.

This sequence belongs to the MurCDEF family.

Its subcellular location is the cytoplasm. The catalysed reaction is UDP-N-acetyl-alpha-D-muramate + L-alanine + ATP = UDP-N-acetyl-alpha-D-muramoyl-L-alanine + ADP + phosphate + H(+). The protein operates within cell wall biogenesis; peptidoglycan biosynthesis. Its function is as follows. Cell wall formation. This is UDP-N-acetylmuramate--L-alanine ligase from Acinetobacter baumannii (strain SDF).